We begin with the raw amino-acid sequence, 282 residues long: Trihydroxynaphthalene reductase (282 aa).

Ile-41, Asn-114, and Arg-147 together coordinate NADP(+). Catalysis depends on proton donor residues Ser-164 and Tyr-178. 4 residues coordinate NADP(+): Tyr-178, Lys-182, Ile-211, and Thr-213. Residue Lys-182 is the Lowers pKa of active site Tyr of the active site.

Belongs to the short-chain dehydrogenases/reductases (SDR) family. In terms of assembly, homotetramer.

It functions in the pathway pigment biosynthesis; melanin biosynthesis. In terms of biological role, catalyzes the NADPH-dependent reduction of 1,3,8-trihydroxynaphthalene (T3HN) into (-)-vermelone. Essential for appressorial penetration of colletotrichum lagenarium. This is Trihydroxynaphthalene reductase (THR1) from Colletotrichum orbiculare (strain 104-T / ATCC 96160 / CBS 514.97 / LARS 414 / MAFF 240422) (Cucumber anthracnose fungus).